Consider the following 365-residue polypeptide: Aminomethyltransferase (365 aa).

The protein belongs to the GcvT family. In terms of assembly, the glycine cleavage system is composed of four proteins: P, T, L and H.

The enzyme catalyses N(6)-[(R)-S(8)-aminomethyldihydrolipoyl]-L-lysyl-[protein] + (6S)-5,6,7,8-tetrahydrofolate = N(6)-[(R)-dihydrolipoyl]-L-lysyl-[protein] + (6R)-5,10-methylene-5,6,7,8-tetrahydrofolate + NH4(+). Functionally, the glycine cleavage system catalyzes the degradation of glycine. In Desulfitobacterium hafniense (strain DSM 10664 / DCB-2), this protein is Aminomethyltransferase.